The sequence spans 402 residues: Serine--glyoxylate aminotransferase (402 aa).

Lysine 201 is subject to N6-(pyridoxal phosphate)lysine.

The protein belongs to the class-V pyridoxal-phosphate-dependent aminotransferase family. Pyridoxal 5'-phosphate is required as a cofactor.

The catalysed reaction is glyoxylate + L-serine = 3-hydroxypyruvate + glycine. Its pathway is one-carbon metabolism; formaldehyde assimilation via serine pathway. The polypeptide is Serine--glyoxylate aminotransferase (Methylorubrum extorquens (strain ATCC 14718 / DSM 1338 / JCM 2805 / NCIMB 9133 / AM1) (Methylobacterium extorquens)).